The chain runs to 282 residues: ATP synthase gamma chain (282 aa).

The protein belongs to the ATPase gamma chain family. F-type ATPases have 2 components, CF(1) - the catalytic core - and CF(0) - the membrane proton channel. CF(1) has five subunits: alpha(3), beta(3), gamma(1), delta(1), epsilon(1). CF(0) has three main subunits: a, b and c.

The protein localises to the cell membrane. Functionally, produces ATP from ADP in the presence of a proton gradient across the membrane. The gamma chain is believed to be important in regulating ATPase activity and the flow of protons through the CF(0) complex. In Clostridium acetobutylicum (strain ATCC 824 / DSM 792 / JCM 1419 / IAM 19013 / LMG 5710 / NBRC 13948 / NRRL B-527 / VKM B-1787 / 2291 / W), this protein is ATP synthase gamma chain.